Reading from the N-terminus, the 808-residue chain is Ribosome biogenesis protein BOP1 homolog (808 aa).

The interval 1–56 (MTSPKGKPSPKRSAPAPTTAALTPRTEERTEGATSSASASASSHISSSFDSPRDDT) is disordered. Composition is skewed to low complexity over residues 12–24 (RSAP…ALTP) and 33–50 (ATSS…SSFD). WD repeat units lie at residues 430-469 (GHTA…LMKR), 640-680 (KFSE…RRFK), 682-720 (SGGV…KPYK), 724-766 (SHRG…DYNK), and 777-808 (KHQR…AWTE).

This sequence belongs to the WD repeat BOP1/ERB1 family.

It localises to the nucleus. The protein localises to the nucleolus. The protein resides in the nucleoplasm. Required for maturation of ribosomal RNAs and formation of the large ribosomal subunit. The sequence is that of Ribosome biogenesis protein BOP1 homolog from Leishmania infantum.